Reading from the N-terminus, the 273-residue chain is Bifunctional protein FolD (273 aa).

Residues 155–157, Ser-182, and Ile-223 contribute to the NADP(+) site; that span reads GRS.

It belongs to the tetrahydrofolate dehydrogenase/cyclohydrolase family. As to quaternary structure, homodimer.

The enzyme catalyses (6R)-5,10-methylene-5,6,7,8-tetrahydrofolate + NADP(+) = (6R)-5,10-methenyltetrahydrofolate + NADPH. The catalysed reaction is (6R)-5,10-methenyltetrahydrofolate + H2O = (6R)-10-formyltetrahydrofolate + H(+). It functions in the pathway one-carbon metabolism; tetrahydrofolate interconversion. Its function is as follows. Catalyzes the oxidation of 5,10-methylenetetrahydrofolate to 5,10-methenyltetrahydrofolate and then the hydrolysis of 5,10-methenyltetrahydrofolate to 10-formyltetrahydrofolate. The sequence is that of Bifunctional protein FolD from Pseudothermotoga lettingae (strain ATCC BAA-301 / DSM 14385 / NBRC 107922 / TMO) (Thermotoga lettingae).